The primary structure comprises 670 residues: Solute carrier organic anion transporter family member 1A1 (670 aa).

The Cytoplasmic segment spans residues 1–20; sequence MEETEKKIATQEGRLFSKMK. A helical membrane pass occupies residues 21-40; the sequence is VFLLSLTCACLTKSLSGVYM. Topologically, residues 41 to 59 are extracellular; it reads NSMLTQIERQFDISTSVAG. The chain crosses the membrane as a helical span at residues 60 to 80; it reads LINGSFEIGNLFFIVFVSYFG. At 81–86 the chain is on the cytoplasmic side; that stretch reads TKLHRP. A helical transmembrane segment spans residues 87 to 111; the sequence is VVIGIGCVIMGLGCLLMSLPHFFMG. The Extracellular portion of the chain corresponds to 112–155; the sequence is RYEYETTISPTGNLSSNSFLCMENRTQTLKPTQDPAECVKEMKS. Residues Asn-124 and Asn-135 are each glycosylated (N-linked (GlcNAc...) asparagine). The chain crosses the membrane as a helical span at residues 156-184; it reads LMWICVMVGNIIRGIGETPIVPLGISYIE. The Cytoplasmic segment spans residues 185–203; the sequence is DFAKSENSPLYIGILEMGK. A helical transmembrane segment spans residues 204–224; the sequence is VAGPIFGLLLGSYCAQIYVDI. Topologically, residues 225 to 242 are extracellular; the sequence is GSVNTDDLTITPSDTRWV. The chain crosses the membrane as a helical span at residues 243–267; the sequence is GAWWIGFLVCAGVNILTSIPFFFLP. Topologically, residues 268–311 are cytoplasmic; the sequence is KALPKKGQQENVAVTKDGKVEKYGGQAREENLGITKDFLTFMKR. Residues 312 to 333 traverse the membrane as a helical segment; it reads LFCNPIYMLFILTSVLQVNGFI. At 334 to 353 the chain is on the extracellular side; that stretch reads NKFTFLPKYLEQQYGKSTAE. Residues 354-377 traverse the membrane as a helical segment; sequence AIFLIGVYSLPPICLGYLIGGFIM. The Cytoplasmic portion of the chain corresponds to 378–381; the sequence is KKFK. A helical membrane pass occupies residues 382–405; that stretch reads ITVKKAAYLAFCLSVFEYLLFLCH. Residues 406-513 lie on the Extracellular side of the membrane; the sequence is FMLTCDNAAV…PECANRLQYF (108 aa). In terms of domain architecture, Kazal-like spans 433–488; the sequence is SKVLADCNTRCSCSTNTWDPVCGDNGVAYMSACLAGCKKFVGTGTNMVFQDCSCIQ. Disulfide bonds link Cys-439/Cys-469, Cys-445/Cys-465, and Cys-454/Cys-486. N-linked (GlcNAc...) asparagine glycosylation occurs at Asn-492. Residues 514–536 form a helical membrane-spanning segment; the sequence is LILTIIISFIYSLTAIPGYMVFL. Residues 537–545 are Cytoplasmic-facing; it reads RCVKSEEKS. Residues 546 to 571 form a helical membrane-spanning segment; it reads LGVGLHTFCIRVFAGIPAPVYFGALI. Residues 572 to 605 are Extracellular-facing; that stretch reads DRTCLHWGTLKCGQRGACRMYDINSFRHIYLGLP. A helical membrane pass occupies residues 606–623; sequence IALRGSSYLPAFFILILM. Topologically, residues 624–670 are cytoplasmic; the sequence is RKFQFPGDIDSSATDHTEMMLGEKESEHTDVHGSPQVENDGELKTKL. A phosphoserine mark is found at Ser-634 and Ser-635. Residues 645 to 654 show a composition bias toward basic and acidic residues; sequence GEKESEHTDV. Positions 645 to 670 are disordered; that stretch reads GEKESEHTDVHGSPQVENDGELKTKL.

This sequence belongs to the organo anion transporter (TC 2.A.60) family. Binds to PDZK1. Interaction with PDZK1 is required for expression on hepatocyte surface. Glycosylated. Highly expressed in liver and kidney, and at lower levels in brain, lung, skeletal muscle and proximal colon.

The protein resides in the basolateral cell membrane. The catalysed reaction is estrone 3-sulfate(out) + hydrogencarbonate(in) = estrone 3-sulfate(in) + hydrogencarbonate(out). It catalyses the reaction taurocholate(out) + hydrogencarbonate(in) = taurocholate(in) + hydrogencarbonate(out). It carries out the reaction L-thyroxine(out) = L-thyroxine(in). The enzyme catalyses prostaglandin E2(out) = prostaglandin E2(in). The catalysed reaction is 17beta-estradiol 17-O-(beta-D-glucuronate)(out) = 17beta-estradiol 17-O-(beta-D-glucuronate)(in). It catalyses the reaction dehydroepiandrosterone 3-sulfate(out) = dehydroepiandrosterone 3-sulfate(in). Mediates the Na(+)-independent transport of organic anions such as steroid sulfate conjugates (dehydroepiandrosterone sulfate (DHEAS), 17-beta-glucuronosyl estradiol, estrone-3-sulfate), conjugated (taurocholate) and unconjugated (cholate) bile acids, prostaglandin E2 (PGE2) and L-thyroxine T4. Also capable of transporting sulfobromophthalein (BSP), ouabain and gadoxetate. Hydrogencarbonate/HCO3(-) acts as the probable counteranion that exchanges for organic anions. Shows a pH-sensitive substrate specificity which may be ascribed to the protonation state of the binding site and leads to a stimulation of substrate transport in an acidic microenvironment. The sequence is that of Solute carrier organic anion transporter family member 1A1 from Rattus norvegicus (Rat).